Here is an 82-residue protein sequence, read N- to C-terminus: Sec-independent protein translocase protein TatA (82 aa).

A helical membrane pass occupies residues 1–21 (MGLSTTHLIIFLVIIVLIFGT).

It belongs to the TatA/E family. As to quaternary structure, the Tat system comprises two distinct complexes: a TatABC complex, containing multiple copies of TatA, TatB and TatC subunits, and a separate TatA complex, containing only TatA subunits. Substrates initially bind to the TatABC complex, which probably triggers association of the separate TatA complex to form the active translocon.

The protein resides in the cell inner membrane. Functionally, part of the twin-arginine translocation (Tat) system that transports large folded proteins containing a characteristic twin-arginine motif in their signal peptide across membranes. TatA could form the protein-conducting channel of the Tat system. This is Sec-independent protein translocase protein TatA from Leptothrix cholodnii (strain ATCC 51168 / LMG 8142 / SP-6) (Leptothrix discophora (strain SP-6)).